Here is a 493-residue protein sequence, read N- to C-terminus: 5'-3' exonuclease PLD3 (493 aa).

Over 1-37 (MSSKVEYKPIQPHEEAENHFLQHELHKVKARKYYRCA) the chain is Cytoplasmic. A helical; Signal-anchor for type II membrane protein transmembrane segment spans residues 38-58 (LVVAIIITLVFCILASQLLLF). Residues 59 to 493 (PFLSITSQTT…LSSWKEKCIF (435 aa)) are Lumenal-facing. Asparagine 99 carries an N-linked (GlcNAc...) asparagine glycan. In terms of domain architecture, PLD phosphodiesterase 1 spans 197 to 224 (TDGILHTKFWVVDNEHFYIGSANMDWRS). Residues histidine 202, lysine 204, and aspartate 209 contribute to the active site. Asparagine 237, asparagine 259, asparagine 269, asparagine 285, and asparagine 388 each carry an N-linked (GlcNAc...) asparagine glycan. Residues 412–438 (YARVNHNKYMVTDRVAYIGTSNWSGDY) enclose the PLD phosphodiesterase 2 domain. Catalysis depends on residues histidine 417, lysine 419, and aspartate 424. Residues asparagine 433, asparagine 450, and asparagine 476 are each glycosylated (N-linked (GlcNAc...) asparagine).

This sequence belongs to the phospholipase D family. N-glycosylated. In terms of processing, proteolytically processed to a soluble form that is stable within endosomes and lysosomes. During transport through the secretory pathway becomes proteolysed by cysteine proteases, thereby releasing a stable soluble lysosomal lumenal polypeptide, whereas the transmembrane-bound fragment is rapidly degraded. Its transport route to lysosomes involves ubiquitination and the ESCRT complex. Post-translationally, ubiquitinated. Ubiquitination mediates sorting into lysosomes.

The protein localises to the endoplasmic reticulum membrane. The protein resides in the lysosome lumen. It is found in the early endosome membrane. Its subcellular location is the late endosome membrane. It localises to the golgi apparatus membrane. The protein localises to the endosome membrane. It catalyses the reaction Exonucleolytic cleavage in the 5'- to 3'-direction to yield nucleoside 3'-phosphates.. Its function is as follows. 5'-&gt;3' DNA exonuclease which digests single-stranded DNA (ssDNA). Regulates inflammatory cytokine responses via the degradation of nucleic acids, by reducing the concentration of ssDNA able to stimulate TLR9, a nucleotide-sensing receptor in collaboration with PLD4. May be important in myotube formation. Plays a role in lysosomal homeostasis. Involved in the regulation of endosomal protein sorting. This Xenopus laevis (African clawed frog) protein is 5'-3' exonuclease PLD3 (pld3).